Reading from the N-terminus, the 721-residue chain is Polyribonucleotide nucleotidyltransferase (721 aa).

Mg(2+)-binding residues include aspartate 490 and aspartate 496. The 67-residue stretch at 557–623 (PRIISIKINP…RIAGLTKEAK (67 aa)) folds into the KH domain. An S1 motif domain is found at 625 to 693 (GEEYEGTVVK…DRGKIDLIRP (69 aa)). Positions 693-721 (PELEGKIAPREPRAPRGGGDRGPRPPRRD) are disordered.

It belongs to the polyribonucleotide nucleotidyltransferase family. Mg(2+) is required as a cofactor.

It is found in the cytoplasm. The catalysed reaction is RNA(n+1) + phosphate = RNA(n) + a ribonucleoside 5'-diphosphate. Functionally, involved in mRNA degradation. Catalyzes the phosphorolysis of single-stranded polyribonucleotides processively in the 3'- to 5'-direction. This is Polyribonucleotide nucleotidyltransferase from Deinococcus deserti (strain DSM 17065 / CIP 109153 / LMG 22923 / VCD115).